Consider the following 310-residue polypeptide: Methionyl-tRNA formyltransferase (310 aa).

114-117 is a binding site for (6S)-5,6,7,8-tetrahydrofolate; that stretch reads SLLP.

The protein belongs to the Fmt family.

It carries out the reaction L-methionyl-tRNA(fMet) + (6R)-10-formyltetrahydrofolate = N-formyl-L-methionyl-tRNA(fMet) + (6S)-5,6,7,8-tetrahydrofolate + H(+). Attaches a formyl group to the free amino group of methionyl-tRNA(fMet). The formyl group appears to play a dual role in the initiator identity of N-formylmethionyl-tRNA by promoting its recognition by IF2 and preventing the misappropriation of this tRNA by the elongation apparatus. The polypeptide is Methionyl-tRNA formyltransferase (Granulibacter bethesdensis (strain ATCC BAA-1260 / CGDNIH1)).